A 984-amino-acid polypeptide reads, in one-letter code: Probable beta-galactosidase C (984 aa).

Positions methionine 1 to alanine 23 are cleaved as a signal peptide. Substrate contacts are provided by tyrosine 82, asparagine 127, alanine 128, glutamate 129, and asparagine 187. Glutamate 188 (proton donor) is an active-site residue. A glycan (N-linked (GlcNAc...) asparagine) is linked at asparagine 197. Residue tyrosine 251 coordinates substrate. Cysteine 257 and cysteine 304 are disulfide-bonded. A glycan (N-linked (GlcNAc...) asparagine) is linked at asparagine 276. Glutamate 287 serves as the catalytic Nucleophile. Tyrosine 353 provides a ligand contact to substrate. N-linked (GlcNAc...) asparagine glycans are attached at residues asparagine 391, asparagine 421, asparagine 434, asparagine 517, asparagine 602, asparagine 677, asparagine 715, asparagine 720, asparagine 759, and asparagine 805.

It belongs to the glycosyl hydrolase 35 family.

The protein resides in the secreted. The enzyme catalyses Hydrolysis of terminal non-reducing beta-D-galactose residues in beta-D-galactosides.. Its function is as follows. Cleaves beta-linked terminal galactosyl residues from gangliosides, glycoproteins, and glycosaminoglycans. The sequence is that of Probable beta-galactosidase C (lacC) from Aspergillus flavus (strain ATCC 200026 / FGSC A1120 / IAM 13836 / NRRL 3357 / JCM 12722 / SRRC 167).